Consider the following 110-residue polypeptide: Snake venom vascular endothelial growth factor toxin ICPP (110 aa).

A Pyrrolidone carboxylic acid modification is found at Gln-1. Cystine bridges form between Cys-14/Cys-56, Cys-45/Cys-91, and Cys-49/Cys-93.

In terms of assembly, homodimer; disulfide-linked. Interacts with high affinity with KDR/VEGFR-2, and with a lower affinity with neuropilin-1 (NRP1) and neuropilin-2 (NRP2). Expressed by the venom gland.

Its subcellular location is the secreted. Functionally, snake venom VEGFs may contribute to venom dispersion and prey subjugation by inducing vascular permeability and hypotension. This protein increases vascular permeability and angiogenesis probably through VEGF receptor (KDR/VEGFR-2) signaling. Induces DNA synthesis in human umbilical vein endothelial cells, and promotes mouse embryonic stem cell proliferation and differentiation. It may also induce a drastic hypotensive effect after intravenous injection. The hypotension is mediated by nitric oxide (NO), which is produced by VEGF-activated endothelium NO synthase. This is Snake venom vascular endothelial growth factor toxin ICPP from Macrovipera lebetinus (Levantine viper).